Consider the following 349-residue polypeptide: MQNKIILENMTVDELKEFFVNNGEKPFRALQYFQAIHKNRIFNPDEMTNFSNSLRGKLNQYNDIKNCSIIKRIDSKLDNTKKYLIEMSDGNIVETVFMQYKTHTSICLSTQIGCKMGCKFCASTKKSFVRNLQPYEMCAQIYLVENDLDIRINNIVLMGIGEPLDNYDNVSRFIDLITDKDGQDMSIRNITLSTCGLVDKIIRLANDDIGINITISLHNPFDNERNKLMPIGNKYSIEEILDACDYYFKKTKRRIGFEYTVIENVNDSKKYMDKLVSLLKNRNCLLNLITLNPIEEFNQKSPDRYKMTEFMEYMNKNNVNTTIRRKQGIDIDGACGQLRINNMTKRGVK.

Catalysis depends on E94, which acts as the Proton acceptor. A Radical SAM core domain is found at 100 to 324 (YKTHTSICLS…NKNNVNTTIR (225 aa)). C107 and C335 are joined by a disulfide. [4Fe-4S] cluster-binding residues include C114, C118, and C121. S-adenosyl-L-methionine is bound by residues 161-162 (GE), S193, 216-218 (SLH), and N292. The active-site S-methylcysteine intermediate is the C335.

The protein belongs to the radical SAM superfamily. RlmN family. [4Fe-4S] cluster serves as cofactor.

Its subcellular location is the cytoplasm. It carries out the reaction adenosine(2503) in 23S rRNA + 2 reduced [2Fe-2S]-[ferredoxin] + 2 S-adenosyl-L-methionine = 2-methyladenosine(2503) in 23S rRNA + 5'-deoxyadenosine + L-methionine + 2 oxidized [2Fe-2S]-[ferredoxin] + S-adenosyl-L-homocysteine. It catalyses the reaction adenosine(37) in tRNA + 2 reduced [2Fe-2S]-[ferredoxin] + 2 S-adenosyl-L-methionine = 2-methyladenosine(37) in tRNA + 5'-deoxyadenosine + L-methionine + 2 oxidized [2Fe-2S]-[ferredoxin] + S-adenosyl-L-homocysteine. Specifically methylates position 2 of adenine 2503 in 23S rRNA and position 2 of adenine 37 in tRNAs. In Finegoldia magna (strain ATCC 29328 / DSM 20472 / WAL 2508) (Peptostreptococcus magnus), this protein is Probable dual-specificity RNA methyltransferase RlmN.